Reading from the N-terminus, the 69-residue chain is Ribosome modulation factor (69 aa).

This sequence belongs to the ribosome modulation factor family.

It localises to the cytoplasm. Functionally, during stationary phase, converts 70S ribosomes to an inactive dimeric form (100S ribosomes). The sequence is that of Ribosome modulation factor from Hahella chejuensis (strain KCTC 2396).